The chain runs to 570 residues: Double-stranded RNA-binding protein Staufen homolog 2 (570 aa).

Residues 8–75 (TPVCLVNELA…ANKALTESTL (68 aa)) enclose the DRBM 1 domain. 2 disordered regions span residues 71-94 (TEST…PGSI) and 178-203 (ALQN…DDKD). Over residues 83-94 (PKSNVNNNPGSI) the composition is skewed to polar residues. Positions 95 to 181 (TPTVELNGLA…AMKALQALQN (87 aa)) constitute a DRBM 2 domain. Phosphoserine is present on S188. Residues 194–203 (SGKEMDDDKD) show a composition bias toward basic and acidic residues. 2 consecutive DRBM domains span residues 207-274 (SEIS…ELKK) and 307-375 (NPIS…QLGY). 2 consecutive short sequence motifs (nuclear localization signal) follow at residues 273-291 (KKLP…FKKR) and 373-412 (LGYK…PKGI). The interval 381–413 (LQDPLDKTGENKGWSGPKPGFPEPTNNTPKGIL) is disordered. Positions 381 to 570 (LQDPLDKTGE…QDCKKSKSAI (190 aa)) are required for dendritic transport. Residue S395 is modified to Phosphoserine. Residue T405 is modified to Phosphothreonine. Residues S416, S426, S440, S455, and S492 each carry the phosphoserine modification. Residues 545 to 570 (LREKADNNQAKPASISQDCKKSKSAI) form a disordered region. Polar residues predominate over residues 551 to 561 (NNQAKPASISQ).

As to quaternary structure, interacts with microtubules. Isoform 2 and isoform 3 may also interact with ribosomes, and this association is independent of translation. Identified in a mRNP complex, at least composed of DHX9, DDX3X, ELAVL1, HNRNPU, IGF2BP1, ILF3, PABPC1, PCBP2, PTBP2, STAU1, STAU2, SYNCRIP and YBX1. Interacts with the exportin XPO5. This requires RNA and RAN bound to GTP. Interacts with TRIM71 (via NHL repeats) in an RNA-dependent manner. In terms of tissue distribution, expressed in brain and neurons, where isoform 2 and isoform 3 appear to be the most abundant. Expressed at the neuromuscular junction of the extensor digitorum longus, tibialis anterior and soleus muscles. Expression at neuromuscular junctions is most pronounced in slow-twitch muscle. Also weakly expressed in heart, kidney, ovary and testis.

It localises to the cytoplasm. It is found in the nucleus. The protein resides in the nucleolus. The protein localises to the endoplasmic reticulum. RNA-binding protein required for the microtubule-dependent transport of neuronal RNA from the cell body to the dendrite. As protein synthesis occurs within the dendrite, the localization of specific mRNAs to dendrites may be a prerequisite for neurite outgrowth and plasticity at sites distant from the cell body. This chain is Double-stranded RNA-binding protein Staufen homolog 2 (Stau2), found in Mus musculus (Mouse).